Reading from the N-terminus, the 225-residue chain is NAD(P)H-quinone oxidoreductase subunit K, chloroplastic (225 aa).

Residues C43, C44, C108, and C139 each coordinate [4Fe-4S] cluster.

This sequence belongs to the complex I 20 kDa subunit family. As to quaternary structure, NDH is composed of at least 16 different subunits, 5 of which are encoded in the nucleus. It depends on [4Fe-4S] cluster as a cofactor.

The protein resides in the plastid. The protein localises to the chloroplast thylakoid membrane. It catalyses the reaction a plastoquinone + NADH + (n+1) H(+)(in) = a plastoquinol + NAD(+) + n H(+)(out). The enzyme catalyses a plastoquinone + NADPH + (n+1) H(+)(in) = a plastoquinol + NADP(+) + n H(+)(out). Functionally, NDH shuttles electrons from NAD(P)H:plastoquinone, via FMN and iron-sulfur (Fe-S) centers, to quinones in the photosynthetic chain and possibly in a chloroplast respiratory chain. The immediate electron acceptor for the enzyme in this species is believed to be plastoquinone. Couples the redox reaction to proton translocation, and thus conserves the redox energy in a proton gradient. The sequence is that of NAD(P)H-quinone oxidoreductase subunit K, chloroplastic from Lobularia maritima (Sweet alyssum).